Consider the following 349-residue polypeptide: MAASSTFFSPSLFLCVLVLIDITLAVSLDTDMKLKSENNNHLQNQETWPQQPRSGHHHKHGLAKKGRVLALPVRGQPAGEEALRVGSGAPAMEELVPLGQPAALKQDKDKDVFLGFELPHAERENQSPGSERGKKQNREQRRHSRRDRLKHHRGKTAVGPSSLYKKPESFEQQFQNLQAEEATSPTPTVLPFTALDLVVSTEEPPVLPATSPRSQARLRQDGDVMPTLDMALFDWTDYEDLKPEMWPSAKKKEKRRSKSSNGGNETSSAEGEPCDHHLDCLPGSCCDLREHLCKPHNRGLNNKCYDDCMCTEGLRCYAKFHRNRRVTRRKGRCVEPESANGEQGSFINV.

Positions M1–A25 are cleaved as a signal peptide. Residues N40 to R53 are compositionally biased toward polar residues. Disordered stretches follow at residues N40–A63, P119–K166, and W246–P273. Residues S54 to A63 are compositionally biased toward basic residues. Residues P119–E139 are compositionally biased toward basic and acidic residues. Basic residues-rich tracts occupy residues Q140–K155 and A249–K258. N-linked (GlcNAc...) asparagine glycosylation is present at N264.

This sequence belongs to the draxin family.

It localises to the secreted. In terms of biological role, chemorepulsive axon guidance protein required for the development of spinal cord and forebrain commissures. Acts as a chemorepulsive guidance protein for commissural axons during development. Able to inhibit or repel neurite outgrowth from dorsal spinal cord and cortical explants in vitro. Binds directly to the neurites and growth cones. In Gallus gallus (Chicken), this protein is Draxin.